The primary structure comprises 675 residues: Mitochondrial distribution and morphology protein 12 (675 aa).

An SMP-LTD domain is found at 1-675 (MSIDLNWDTV…VYPSFWTFLV (675 aa)). Disordered regions lie at residues 66–186 (LPDF…GTNH), 241–270 (GPSWIADQQQQQQQQNNMLPGGAGGGGAGG), 307–327 (GTGKPTPGPSPLTGTSTPLGT), 365–390 (TGPRHKRNPSSQSLNSVGDYSPVAPA), and 444–517 (PKQG…RFRE). Positions 78 to 101 (SSEESDSEEEVAYENEGEYLDDPV) are enriched in acidic residues. A compositionally biased stretch (low complexity) spans 123–137 (NSSTGSRNGSGPNSG). Residues 261-270 (GGAGGGGAGG) show a composition bias toward gly residues. The span at 317–327 (PLTGTSTPLGT) shows a compositional bias: low complexity. Composition is skewed to polar residues over residues 373 to 382 (PSSQSLNSVG) and 454 to 469 (VSTLAPNSAGTSNNRA). Over residues 497-510 (EPEEDEEEEEEGEE) the composition is skewed to acidic residues.

The protein belongs to the MDM12 family. In terms of assembly, component of the ER-mitochondria encounter structure (ERMES) or MDM complex, composed of mmm-1, mdm10, mdm12 and mdm34. A mmm-1 homodimer associates with one molecule of mdm12 on each side in a pairwise head-to-tail manner, and the SMP-LTD domains of mmm-1 and mdm12 generate a continuous hydrophobic tunnel for phospholipid trafficking.

Its subcellular location is the mitochondrion outer membrane. The protein localises to the endoplasmic reticulum membrane. Functionally, component of the ERMES/MDM complex, which serves as a molecular tether to connect the endoplasmic reticulum (ER) and mitochondria. Components of this complex are involved in the control of mitochondrial shape and protein biogenesis, and function in nonvesicular lipid trafficking between the ER and mitochondria. Mdm12 is required for the interaction of the ER-resident membrane protein MMM1 and the outer mitochondrial membrane-resident beta-barrel protein mdm10. The mdm12-mmm-1 subcomplex functions in the major beta-barrel assembly pathway that is responsible for biogenesis of all mitochondrial outer membrane beta-barrel proteins, and acts in a late step after the SAM complex. The mdm10-mdm12-mmm-1 subcomplex further acts in the TOM40-specific pathway after the action of the mdm12-mmm1 complex. Essential for establishing and maintaining the structure of mitochondria and maintenance of mtDNA nucleoids. This is Mitochondrial distribution and morphology protein 12 from Neurospora crassa (strain ATCC 24698 / 74-OR23-1A / CBS 708.71 / DSM 1257 / FGSC 987).